The primary structure comprises 54 residues: Large ribosomal subunit protein bL33 (54 aa).

This sequence belongs to the bacterial ribosomal protein bL33 family.

In Petrotoga mobilis (strain DSM 10674 / SJ95), this protein is Large ribosomal subunit protein bL33.